The following is a 504-amino-acid chain: Anaerobic nitric oxide reductase transcription regulator NorR (504 aa).

Asp-57 bears the 4-aspartylphosphate mark. The Sigma-54 factor interaction domain maps to 187–416 (MIGLSPGMTQ…LEHAIHRAVV (230 aa)). Residues 215 to 222 (GETGTGKE) and 278 to 287 (ADNGTLFLDE) each bind ATP. The segment at residues 479–498 (WAACARMLETDVANLHRLAK) is a DNA-binding region (H-T-H motif).

It participates in nitrogen metabolism; nitric oxide reduction. In terms of biological role, required for the expression of anaerobic nitric oxide (NO) reductase, acts as a transcriptional activator for at least the norVW operon. Activation also requires sigma-54. The polypeptide is Anaerobic nitric oxide reductase transcription regulator NorR (Escherichia coli (strain ATCC 8739 / DSM 1576 / NBRC 3972 / NCIMB 8545 / WDCM 00012 / Crooks)).